Reading from the N-terminus, the 299-residue chain is tRNA dimethylallyltransferase (299 aa).

10-17 serves as a coordination point for ATP; it reads GPTAVGKT. 12 to 17 is a binding site for substrate; the sequence is TAVGKT. The interval 35 to 38 is interaction with substrate tRNA; sequence DSQQ.

This sequence belongs to the IPP transferase family. As to quaternary structure, monomer. Requires Mg(2+) as cofactor.

It carries out the reaction adenosine(37) in tRNA + dimethylallyl diphosphate = N(6)-dimethylallyladenosine(37) in tRNA + diphosphate. In terms of biological role, catalyzes the transfer of a dimethylallyl group onto the adenine at position 37 in tRNAs that read codons beginning with uridine, leading to the formation of N6-(dimethylallyl)adenosine (i(6)A). The polypeptide is tRNA dimethylallyltransferase (Streptococcus thermophilus (strain ATCC BAA-491 / LMD-9)).